The chain runs to 662 residues: Replication protein E1 (662 aa).

Residues 28–38 (VDRRTGDKPSS) show a composition bias toward basic and acidic residues. Residues 28–60 (VDRRTGDKPSSDEDEDEDADEGEDFVDFIDDRP) are disordered. The segment covering 39–55 (DEDEDEDADEGEDFVDF) has biased composition (acidic residues). The short motif at 88 to 90 (KRK) is the Nuclear localization signal element. Residues Ser94, Ser98, and Ser111 each carry the phosphoserine; by host modification. The Nuclear export signal motif lies at 110–119 (LSPRLDAIKL). The disordered stretch occupies residues 160 to 197 (TQDGRQDADEGSGRNVGGNGGQEEERAGGDGEESQTQG). Residues 199 to 365 (QTDKAACGVL…QTMVGHALEE (167 aa)) are DNA-binding region. Residues 464 to 614 (VEFIPFLCAF…FPLTTQGEPL (151 aa)) enclose the SF3 helicase domain. 490-497 (GPADTGKS) serves as a coordination point for ATP. Lys571 participates in a covalent cross-link: Glycyl lysine isopeptide (Lys-Gly) (interchain with G-Cter in SUMO). The tract at residues 637–662 (DPDDEEENGNPSEPFRCVPGQNARTL) is disordered.

Belongs to the papillomaviridae E1 protein family. Can form hexamers. Interacts with E2 protein; this interaction increases E1 DNA binding specificity. Interacts with host DNA polymerase subunit POLA2. Interacts with host single stranded DNA-binding protein RPA1. Interacts with host TOP1; this interaction stimulates the enzymatic activity of TOP1. Phosphorylated. In terms of processing, sumoylated.

It localises to the host nucleus. It catalyses the reaction Couples ATP hydrolysis with the unwinding of duplex DNA by translocating in the 3'-5' direction.. It carries out the reaction ATP + H2O = ADP + phosphate + H(+). In terms of biological role, ATP-dependent DNA 3'-5' helicase required for initiation of viral DNA replication. It forms a complex with the viral E2 protein. The E1-E2 complex binds to the replication origin which contains binding sites for both proteins. During the initial step, a dimer of E1 interacts with a dimer of protein E2 leading to a complex that binds the viral origin of replication with high specificity. Then, a second dimer of E1 displaces the E2 dimer in an ATP-dependent manner to form the E1 tetramer. Following this, two E1 monomers are added to each half of the site, which results in the formation of two E1 trimers on the viral ori. Subsequently, two hexamers will be created. The double hexamer acts as a bi-directional helicase machinery and unwinds the viral DNA and then recruits the host DNA polymerase to start replication. The chain is Replication protein E1 from Homo sapiens (Human).